A 343-amino-acid polypeptide reads, in one-letter code: Probable long-chain-alcohol O-fatty-acyltransferase 2 (343 aa).

Helical transmembrane passes span 7–27 (NLIK…YISS), 36–56 (LLSL…FSSV), 58–78 (FCVI…FLFA), 117–137 (PMSK…LHVY), 148–168 (FAFL…ILVF), 235–255 (GMLA…FYVI), 260–280 (TWEV…EIAM), and 292–312 (AVSG…LFYP).

The protein belongs to the wax synthase family.

The protein localises to the membrane. The enzyme catalyses a long chain fatty alcohol + a fatty acyl-CoA = a wax ester + CoA. Its function is as follows. Catalyzes the final step in the synthesis of long-chain linear esters (waxes). The polypeptide is Probable long-chain-alcohol O-fatty-acyltransferase 2 (AT2) (Arabidopsis thaliana (Mouse-ear cress)).